The chain runs to 189 residues: Ribosome hibernation promotion factor (189 aa).

The protein belongs to the HPF/YfiA ribosome-associated protein family. Long HPF subfamily. In terms of assembly, interacts with 100S ribosomes. Not associated with 70S ribosome monomers, about 1 monomer per ribosome.

The protein resides in the cytoplasm. In terms of biological role, required for dimerization of active 70S ribosomes into 100S ribosomes in stationary phase; 100S ribosomes are translationally inactive and sometimes present during exponential growth. May not be the only factor implicated. Might negatively regulate the activity of the sigma-54 factor (SigL). This is Ribosome hibernation promotion factor (yvyD) from Bacillus subtilis (strain 168).